Consider the following 136-residue polypeptide: ATP synthase F(0) complex subunit C1, mitochondrial (136 aa).

Residues 1-61 constitute a mitochondrion transit peptide; that stretch reads MQTTGALLIS…REFQTSVVSR (61 aa). Residues 77-97 traverse the membrane as a helical segment; the sequence is VGVAGSGAGIGTVFGSLIIGY. Lys104 is subject to N6,N6,N6-trimethyllysine. Residues 112-132 traverse the membrane as a helical segment; sequence ILGFALSEAMGLFCLMVAFLI.

The protein belongs to the ATPase C chain family. Homooctamer; the c-ring consists of eight c subunits forming a circle, and each subunit adopts a hairpin shape. Component of the ATP synthase complex composed at least of ATP5F1A/subunit alpha, ATP5F1B/subunit beta, ATP5MC1/subunit c (homooctomer), MT-ATP6/subunit a, MT-ATP8/subunit 8, ATP5ME/subunit e, ATP5MF/subunit f, ATP5MG/subunit g, ATP5MK/subunit k, ATP5MJ/subunit j, ATP5F1C/subunit gamma, ATP5F1D/subunit delta, ATP5F1E/subunit epsilon, ATP5PF/subunit F6, ATP5PB/subunit b, ATP5PD/subunit d, ATP5PO/subunit OSCP. ATP synthase complex consists of a soluble F(1) head domain (subunits alpha(3) and beta(3)) - the catalytic core - and a membrane F(0) domain - the membrane proton channel (subunits c, a, 8, e, f, g, k and j). These two domains are linked by a central stalk (subunits gamma, delta, and epsilon) rotating inside the F1 region and a stationary peripheral stalk (subunits F6, b, d, and OSCP). Interacts with TMEM70 (homooligomer form); this interaction facilitates the oligomer formation of subunit c/ATP5MC1 (c-ring) and the c-ring membrane insertion and also protects ATP5MC1 against intramitochondrial proteolysis. Trimethylated by ATPSCKMT at Lys-104. Methylation is required for proper incorporation of the C subunit into the ATP synthase complex and mitochondrial respiration.

The protein localises to the mitochondrion membrane. It carries out the reaction H(+)(in) = H(+)(out). Subunit c, of the mitochondrial membrane ATP synthase complex (F(1)F(0) ATP synthase or Complex V) that produces ATP from ADP in the presence of a proton gradient across the membrane which is generated by electron transport complexes of the respiratory chain. ATP synthase complex consist of a soluble F(1) head domain - the catalytic core - and a membrane F(1) domain - the membrane proton channel. These two domains are linked by a central stalk rotating inside the F(1) region and a stationary peripheral stalk. During catalysis, ATP synthesis in the catalytic domain of F(1) is coupled via a rotary mechanism of the central stalk subunits to proton translocation. With the subunit a (MT-ATP6), forms the proton-conducting channel in the F(0) domain, that contains two crucial half-channels (inlet and outlet) that facilitate proton movement from the mitochondrial intermembrane space (IMS) into the matrix. Protons are taken up via the inlet half-channel and released through the outlet half-channel, following a Grotthuss mechanism. The chain is ATP synthase F(0) complex subunit C1, mitochondrial from Bos taurus (Bovine).